We begin with the raw amino-acid sequence, 373 residues long: MPRECELCGTERAVLRRPKTGDLVCRACFFHVFETEVHQTIVEAQLFRRGDRVAIGASGGKDSTVLAYVMKTLNERYDYGLNLFLLSIDEGITGYRDDSLETVKRNQEQYGIPLKVLGYKELYGWSMDDIVASIGRKNNCTFCGVFRRQALDRGAASLGVDHIVTGHNADDMAETVLMNVLRGDIARLERCTDIITKGPDGVDGDEDDDETEGCGAGRSGFGGSGIRRSKPFKYAYEKEIVMYAYFKQLDYFSTECIYSPNAYRGYARAFLKDLESIRPSSIIDIIHSGENLHVAGQVKRAVQRTCTRCGYISSNELCKACVLLEGLNRGAPALGVRSDKSRAVREARLDGTSDIGRTIPRWEGVQRSSATAW.

This sequence belongs to the TtcA family. CTU1/NCS6/ATPBD3 subfamily.

It is found in the cytoplasm. It participates in tRNA modification; 5-methoxycarbonylmethyl-2-thiouridine-tRNA biosynthesis. In terms of biological role, plays a central role in 2-thiolation of mcm(5)S(2)U at tRNA wobble positions of tRNA(Lys), tRNA(Glu) and tRNA(Gln). Directly binds tRNAs and probably acts by catalyzing adenylation of tRNAs, an intermediate required for 2-thiolation. It is unclear whether it acts as a sulfurtransferase that transfers sulfur from thiocarboxylated URM1 onto the uridine of tRNAs at wobble position. Prior mcm(5) tRNA modification by the elongator complex is required for 2-thiolation. May also be involved in protein urmylation. This is Cytoplasmic tRNA 2-thiolation protein 1 from Malassezia globosa (strain ATCC MYA-4612 / CBS 7966) (Dandruff-associated fungus).